Reading from the N-terminus, the 89-residue chain is MALSHDIKAEVVQGYATHVGDTGSPEVQVALLTTRIEGLTDHFKVNKHDHHSRQGLLRMVGQRRKLLDYLKKRDVNRYRTLIERLGLRK.

This sequence belongs to the universal ribosomal protein uS15 family. In terms of assembly, part of the 30S ribosomal subunit. Forms a bridge to the 50S subunit in the 70S ribosome, contacting the 23S rRNA.

Its function is as follows. One of the primary rRNA binding proteins, it binds directly to 16S rRNA where it helps nucleate assembly of the platform of the 30S subunit by binding and bridging several RNA helices of the 16S rRNA. In terms of biological role, forms an intersubunit bridge (bridge B4) with the 23S rRNA of the 50S subunit in the ribosome. This is Small ribosomal subunit protein uS15 from Acidithiobacillus ferrooxidans (strain ATCC 23270 / DSM 14882 / CIP 104768 / NCIMB 8455) (Ferrobacillus ferrooxidans (strain ATCC 23270)).